Reading from the N-terminus, the 561-residue chain is Asparagine synthetase [glutamine-hydrolyzing] (561 aa).

Cysteine 2 serves as the catalytic For GATase activity. The Glutamine amidotransferase type-2 domain occupies 2–191 (CGIWALFGSD…PGHYEVLDLK (190 aa)). L-glutamine contacts are provided by residues 49 to 53 (RLAVV), 75 to 77 (NGE), and aspartate 97. One can recognise an Asparagine synthetase domain in the interval 213–536 (HAACDTVGNL…PGRSSWLPHY (324 aa)). Residues leucine 256, isoleucine 288, and 363–364 (SG) each bind ATP.

The enzyme catalyses L-aspartate + L-glutamine + ATP + H2O = L-asparagine + L-glutamate + AMP + diphosphate + H(+). It functions in the pathway amino-acid biosynthesis; L-asparagine biosynthesis; L-asparagine from L-aspartate (L-Gln route): step 1/1. This chain is Asparagine synthetase [glutamine-hydrolyzing] (ASNS), found in Gallus gallus (Chicken).